The chain runs to 131 residues: Large ribosomal subunit protein eL32 (131 aa).

A disordered region spans residues 39–77 (LGEKWRRPKGRHSKMRRKLKSKPKMPNPGYGSPKKVRGL). A compositionally biased stretch (basic residues) spans 44 to 61 (RRPKGRHSKMRRKLKSKP).

Belongs to the eukaryotic ribosomal protein eL32 family.

This is Large ribosomal subunit protein eL32 (rpl32) from Methanopyrus kandleri (strain AV19 / DSM 6324 / JCM 9639 / NBRC 100938).